A 181-amino-acid chain; its full sequence is Large ribosomal subunit protein uL30 (181 aa).

It belongs to the universal ribosomal protein uL30 family. Part of the 50S ribosomal subunit.

The chain is Large ribosomal subunit protein uL30 from Hyperthermus butylicus (strain DSM 5456 / JCM 9403 / PLM1-5).